A 192-amino-acid polypeptide reads, in one-letter code: Protein GrpE (192 aa).

Positions 1–34 (MSSKEQKTPNEQVSEEMENTAEQQVEATQETGEC) are disordered. The segment covering 20–31 (TAEQQVEATQET) has biased composition (polar residues).

Belongs to the GrpE family. Homodimer.

The protein localises to the cytoplasm. Its function is as follows. Participates actively in the response to hyperosmotic and heat shock by preventing the aggregation of stress-denatured proteins, in association with DnaK and GrpE. It is the nucleotide exchange factor for DnaK and may function as a thermosensor. Unfolded proteins bind initially to DnaJ; upon interaction with the DnaJ-bound protein, DnaK hydrolyzes its bound ATP, resulting in the formation of a stable complex. GrpE releases ADP from DnaK; ATP binding to DnaK triggers the release of the substrate protein, thus completing the reaction cycle. Several rounds of ATP-dependent interactions between DnaJ, DnaK and GrpE are required for fully efficient folding. This chain is Protein GrpE, found in Yersinia pestis.